A 269-amino-acid polypeptide reads, in one-letter code: Type III pantothenate kinase (269 aa).

9-16 contributes to the ATP binding site; sequence DVGNTSVK. Residues Tyr-106 and 113–116 each bind substrate; that span reads GADR. The active-site Proton acceptor is the Asp-115. Asp-137 is a binding site for K(+). Thr-140 contributes to the ATP binding site. Substrate is bound at residue Thr-193.

It belongs to the type III pantothenate kinase family. Homodimer. The cofactor is NH4(+). Requires K(+) as cofactor.

It localises to the cytoplasm. The catalysed reaction is (R)-pantothenate + ATP = (R)-4'-phosphopantothenate + ADP + H(+). Its pathway is cofactor biosynthesis; coenzyme A biosynthesis; CoA from (R)-pantothenate: step 1/5. Functionally, catalyzes the phosphorylation of pantothenate (Pan), the first step in CoA biosynthesis. The protein is Type III pantothenate kinase of Lawsonia intracellularis (strain PHE/MN1-00).